The sequence spans 602 residues: Glutathione-regulated potassium-efflux system protein KefB (602 aa).

Helical transmembrane passes span 4–24 (TGLL…VPIA), 29–49 (IGAV…GLGF), 55–75 (EILH…GLEL), 87–107 (IFGV…ALLY), 115–135 (AAVI…LQLM), 152–172 (VLLF…ILAG), 181–201 (VKIG…RYLL), 207–227 (YIVA…VVLG), 230–250 (LFMD…GILL), 261–281 (IAIE…VGMA), 296–318 (LGVL…VFGL), 326–346 (FAGV…AAFS), and 356–376 (ALLL…MQVI). The RCK N-terminal domain maps to 400–519 (DPQVIIVGFG…NGVKDFTRET (120 aa)).

This sequence belongs to the monovalent cation:proton antiporter 2 (CPA2) transporter (TC 2.A.37) family. KefB subfamily. Interacts with the regulatory subunit KefG.

Its subcellular location is the cell inner membrane. Functionally, pore-forming subunit of a potassium efflux system that confers protection against electrophiles. Catalyzes K(+)/H(+) antiport. This Yersinia pestis bv. Antiqua (strain Antiqua) protein is Glutathione-regulated potassium-efflux system protein KefB.